Consider the following 386-residue polypeptide: MNSLQVLTKKVLIETKAFSNYHEDDIFILQQLGLWWHNGPIGFCKQCKMVTSGSMSCSDDDSYELDRALVKAVKENQTDLIKLFVLWGAEINFGIMCAKTKQTKDLCIQLGADPQFLDVGLYNMFVYLVKRKKVLLAIEIYYDNILILDSFDSYDFHLLIDFVYNRFILYLDEKDEEMTRNALVLKFWYKFAIDFKLVKPIRYLSKKFPHLDIWRLKAAIYLGNIDEVHRAYFQENIRLDPNDMMLLACMYPQNKLGIYYCFALGADIDNALDILLRFDETNKQIHRETRGEIIFNIERGYLINIYFCISLGANPYIKKIQDTIKQKHSNIMILLFSKKKLLSPHSVLQNKILDPSDVYKMISTYENTESFYPFSSLAVKLIQQAK.

Belongs to the asfivirus MGF 360 family.

Its function is as follows. Plays a role in virus cell tropism, and may be required for efficient virus replication in macrophages. The chain is Protein MGF 360-4L from African swine fever virus (isolate Warthog/Namibia/Wart80/1980) (ASFV).